Consider the following 214-residue polypeptide: tRNA (guanine-N(7)-)-methyltransferase (214 aa).

S-adenosyl-L-methionine-binding residues include Glu44, Glu69, Asp96, and Asp118. Asp118 is a catalytic residue. Substrate is bound by residues Lys122, Asp154, and Thr191–Glu194.

Belongs to the class I-like SAM-binding methyltransferase superfamily. TrmB family.

It catalyses the reaction guanosine(46) in tRNA + S-adenosyl-L-methionine = N(7)-methylguanosine(46) in tRNA + S-adenosyl-L-homocysteine. Its pathway is tRNA modification; N(7)-methylguanine-tRNA biosynthesis. In terms of biological role, catalyzes the formation of N(7)-methylguanine at position 46 (m7G46) in tRNA. The chain is tRNA (guanine-N(7)-)-methyltransferase from Listeria monocytogenes serovar 1/2a (strain ATCC BAA-679 / EGD-e).